We begin with the raw amino-acid sequence, 310 residues long: Haloalkane dehalogenase (310 aa).

The region spanning 30-140 (PVVLFLHGNP…PMPTWQDFHH (111 aa)) is the AB hydrolase-1 domain. Aspartate 103 acts as the Nucleophile in catalysis. Glutamate 127 functions as the Proton donor in the catalytic mechanism. Catalysis depends on histidine 280, which acts as the Proton acceptor.

The protein belongs to the haloalkane dehalogenase family. Type 2 subfamily. As to quaternary structure, monomer.

It catalyses the reaction 1-haloalkane + H2O = a halide anion + a primary alcohol + H(+). Functionally, catalyzes hydrolytic cleavage of carbon-halogen bonds in halogenated aliphatic compounds, leading to the formation of the corresponding primary alcohols, halide ions and protons. This Bradyrhizobium diazoefficiens (strain JCM 10833 / BCRC 13528 / IAM 13628 / NBRC 14792 / USDA 110) protein is Haloalkane dehalogenase.